The chain runs to 398 residues: L-talarate/galactarate dehydratase (398 aa).

Residues 46-48 (DAK), 82-83 (KR), and lysine 195 contribute to the substrate site. Lysine 197 serves as the catalytic Proton acceptor. Aspartate 226 is a binding site for Mg(2+). Asparagine 228 provides a ligand contact to substrate. Mg(2+) contacts are provided by glutamate 252 and glutamate 278. Histidine 328 (proton donor/acceptor) is an active-site residue. Residue glutamate 348 coordinates substrate.

Belongs to the mandelate racemase/muconate lactonizing enzyme family. In terms of assembly, homooctamer; tetramer of dimers. Mg(2+) is required as a cofactor.

The enzyme catalyses L-altrarate = 5-dehydro-4-deoxy-D-glucarate + H2O. It catalyses the reaction galactarate = 5-dehydro-4-deoxy-D-glucarate + H2O. It carries out the reaction L-altrarate = galactarate. With respect to regulation, competitively inhibited by tartronate. In terms of biological role, catalyzes the efficient dehydration of both L-talarate (also called L-altrarate) and galactarate to 5-keto-4-deoxy-D-glucarate (5-KDG). Also catalyzes the epimerization of L-talarate to galactarate; epimerization occurs in competition with dehydration. Is required for the utilization of L-talarate as a carbon source. Also functions in galactarate utilization. Is not active on other acid sugars. This chain is L-talarate/galactarate dehydratase, found in Salmonella typhimurium (strain LT2 / SGSC1412 / ATCC 700720).